The primary structure comprises 217 residues: Octanoyltransferase (217 aa).

The 176-residue stretch at 32 to 207 (NDSPDELWIV…TLSQLLGYQH (176 aa)) folds into the BPL/LPL catalytic domain. Residues 71–78 (RGGQVTYH), 138–140 (SLG), and 151–153 (GLA) each bind substrate. Cys169 acts as the Acyl-thioester intermediate in catalysis.

The protein belongs to the LipB family.

It localises to the cytoplasm. It carries out the reaction octanoyl-[ACP] + L-lysyl-[protein] = N(6)-octanoyl-L-lysyl-[protein] + holo-[ACP] + H(+). It functions in the pathway protein modification; protein lipoylation via endogenous pathway; protein N(6)-(lipoyl)lysine from octanoyl-[acyl-carrier-protein]: step 1/2. Catalyzes the transfer of endogenously produced octanoic acid from octanoyl-acyl-carrier-protein onto the lipoyl domains of lipoate-dependent enzymes. Lipoyl-ACP can also act as a substrate although octanoyl-ACP is likely to be the physiological substrate. This chain is Octanoyltransferase, found in Shewanella oneidensis (strain ATCC 700550 / JCM 31522 / CIP 106686 / LMG 19005 / NCIMB 14063 / MR-1).